The sequence spans 757 residues: RNA-directed RNA polymerase catalytic subunit (757 aa).

Residues 50-82 (SEKGKWTTNTETGAPQLNPIDGPLPEDNEPSGY) form a disordered region. Over residues 55–64 (WTTNTETGAP) the composition is skewed to polar residues. 2 consecutive short sequence motifs (nuclear localization signal) follow at residues 187–195 (RKRRVRDNM) and 203–216 (RTIG…NKKS). Positions 249-256 (RGFVYFVE) are promoter-binding site. Residues 286–483 (VRKMMTNSQD…GINMSKKKSY (198 aa)) form the RdRp catalytic domain.

Belongs to the influenza viruses polymerase PB1 family. As to quaternary structure, influenza RNA polymerase is composed of three subunits: PB1, PB2 and PA. Interacts (via N-terminus) with PA (via C-terminus). Interacts (via C-terminus) with PB2 (via N-terminus); this interaction is essential for transcription initiation. Post-translationally, phosphorylated by host PRKCA.

It is found in the host nucleus. The protein localises to the host cytoplasm. It catalyses the reaction RNA(n) + a ribonucleoside 5'-triphosphate = RNA(n+1) + diphosphate. Functionally, RNA-dependent RNA polymerase which is responsible for replication and transcription of virus RNA segments. The transcription of viral mRNAs occurs by a unique mechanism called cap-snatching. 5' methylated caps of cellular mRNAs are cleaved after 10-13 nucleotides by PA. In turn, these short capped RNAs are used as primers by PB1 for transcription of viral mRNAs. During virus replication, PB1 initiates RNA synthesis and copy vRNA into complementary RNA (cRNA) which in turn serves as a template for the production of more vRNAs. The protein is RNA-directed RNA polymerase catalytic subunit of Influenza A virus (strain A/Grey teal/Australia/2/1979 H4N4).